Here is a 461-residue protein sequence, read N- to C-terminus: Probable carboxypeptidase MGYG_04702 (461 aa).

The signal sequence occupies residues 1-20; sequence MQKTYLLALVSLLASSLVEA. Residues N48 and N99 are each glycosylated (N-linked (GlcNAc...) asparagine). A Zn(2+)-binding site is contributed by D176. E208 (proton acceptor) is an active-site residue. E209 is a binding site for Zn(2+). An N-linked (GlcNAc...) asparagine glycan is attached at N396.

It belongs to the peptidase M20A family. Requires Zn(2+) as cofactor.

It localises to the secreted. This Arthroderma gypseum (strain ATCC MYA-4604 / CBS 118893) (Microsporum gypseum) protein is Probable carboxypeptidase MGYG_04702.